A 435-amino-acid polypeptide reads, in one-letter code: Mitochondrial association factor 1 form a1 (435 aa).

Residues 1-20 (MWRIWRCRLSFLFATGCLLG) form the signal peptide. The Vacuolar segment spans residues 21–96 (ALTAGLGSQM…VTARRRRNRR (76 aa)). The helical transmembrane segment at 97 to 117 (IALIATAVGVAVILAALYVLR) threads the bilayer. Residues 118 to 435 (RRRAQPPQEP…ERTYTFPQGD (318 aa)) are Cytoplasmic-facing. The tract at residues 120–159 (RAQPPQEPEPPTRLRTPRPRAPSGQQQPSESEPPAGVPMT) is disordered.

Interacts with host SAMM50.

The protein localises to the parasitophorous vacuole membrane. Functionally, during host cell infection by tachyzoites, does not play a role in tethering the parasitophorous vacuole to the host mitochondria, probably because it does not bind host mitochondrial import protein TOMM70. The sequence is that of Mitochondrial association factor 1 form a1 from Toxoplasma gondii (strain ATCC 50611 / Me49).